The sequence spans 1165 residues: DNA-directed RNA polymerase III subunit RPC2 (1165 aa).

The interval 1-21 is disordered; that stretch reads MGVNTAGDPQKSQPKINKGGI. The Zn(2+) site is built by cysteine 1111, cysteine 1114, cysteine 1123, and cysteine 1126. The segment at 1111–1126 adopts a C4-type zinc-finger fold; that stretch reads CGQCGLLGYKGWCNSC.

The protein belongs to the RNA polymerase beta chain family. As to quaternary structure, component of the RNA polymerase III (Pol III) complex consisting of 17 subunits.

The protein localises to the nucleus. The enzyme catalyses RNA(n) + a ribonucleoside 5'-triphosphate = RNA(n+1) + diphosphate. DNA-dependent RNA polymerase catalyzes the transcription of DNA into RNA using the four ribonucleoside triphosphates as substrates. Second largest core component of RNA polymerase III which synthesizes small RNAs, such as 5S rRNA and tRNAs. Proposed to contribute to the polymerase catalytic activity and forms the polymerase active center together with the largest subunit. Pol III is composed of mobile elements and RPC2 is part of the core element with the central large cleft and probably a clamp element that moves to open and close the cleft. The protein is DNA-directed RNA polymerase III subunit RPC2 (rpc2) of Schizosaccharomyces pombe (strain 972 / ATCC 24843) (Fission yeast).